Consider the following 108-residue polypeptide: Circadian clock oscillator protein KaiB (108 aa).

Belongs to the KaiB family. As to quaternary structure, may undergo a major conformational rearrangment; in the free state forms homooligomers. When bound to KaiC switches to a monomeric thioredoxin-fold (KaiB(fs)). The active oscillator complex is probably KaiC(6):KaiB(6).

Functionally, component of the KaiBC clock protein complex, which constitutes the main circadian regulator in cyanobacteria; it may modify the ATPase activity of KaiC. Its function is as follows. May be a metamorphic protein which reversibly switches between an inactive tetrameric fold and a rare, thioredoxin-like monomeric fold (KaiB(fs)). KaiB(fs) binds phospho-KaiC, and perhaps clock output effectors. The polypeptide is Circadian clock oscillator protein KaiB (Prochlorococcus marinus (strain MIT 9515)).